We begin with the raw amino-acid sequence, 350 residues long: Quinolinate phosphoribosyltransferase [decarboxylating] 1b (350 aa).

Substrate is bound by residues arginine 141, 172–174 (TRK), arginine 196, lysine 206, glutamate 239, aspartate 266, 298–300 (SGN), and 319–321 (SGA).

It belongs to the NadC/ModD family.

The catalysed reaction is nicotinate beta-D-ribonucleotide + CO2 + diphosphate = quinolinate + 5-phospho-alpha-D-ribose 1-diphosphate + 2 H(+). It participates in alkaloid biosynthesis; nicotine biosynthesis. Its pathway is cofactor biosynthesis; NAD(+) biosynthesis; nicotinate D-ribonucleotide from quinolinate: step 1/1. Involved in the biosynthesis of pyridine alkaloid natural products, leading mainly to the production of anabasine, anatabine, nicotine and nornicotine, effective deterrents against herbivores with antiparasitic and pesticide properties (neurotoxins); nornicotine serves as the precursor in the synthesis of the carcinogen compound N'-nitrosonornicotine (NNN). Involved in the catabolism of quinolinic acid (QA). The sequence is that of Quinolinate phosphoribosyltransferase [decarboxylating] 1b from Nicotiana tabacum (Common tobacco).